The following is a 200-amino-acid chain: Holliday junction branch migration complex subunit RuvA (200 aa).

The interval 1 to 63 is domain I; the sequence is MIALLTGQIA…EDAILLYGFR (63 aa). Residues 64-142 are domain II; it reads TRTEKSFFQL…KLDSGSIPAG (79 aa). The flexible linker stretch occupies residues 143 to 153; the sequence is DAVGRSLPAGS. The segment at 153 to 200 is domain III; it reads SVLDDVSSALVNLGYKDPQVRKVLAELDCAGSASVEEVLKQALKILMK.

It belongs to the RuvA family. In terms of assembly, homotetramer. Forms an RuvA(8)-RuvB(12)-Holliday junction (HJ) complex. HJ DNA is sandwiched between 2 RuvA tetramers; dsDNA enters through RuvA and exits via RuvB. An RuvB hexamer assembles on each DNA strand where it exits the tetramer. Each RuvB hexamer is contacted by two RuvA subunits (via domain III) on 2 adjacent RuvB subunits; this complex drives branch migration. In the full resolvosome a probable DNA-RuvA(4)-RuvB(12)-RuvC(2) complex forms which resolves the HJ.

The protein resides in the cytoplasm. The RuvA-RuvB-RuvC complex processes Holliday junction (HJ) DNA during genetic recombination and DNA repair, while the RuvA-RuvB complex plays an important role in the rescue of blocked DNA replication forks via replication fork reversal (RFR). RuvA specifically binds to HJ cruciform DNA, conferring on it an open structure. The RuvB hexamer acts as an ATP-dependent pump, pulling dsDNA into and through the RuvAB complex. HJ branch migration allows RuvC to scan DNA until it finds its consensus sequence, where it cleaves and resolves the cruciform DNA. This chain is Holliday junction branch migration complex subunit RuvA, found in Trichlorobacter lovleyi (strain ATCC BAA-1151 / DSM 17278 / SZ) (Geobacter lovleyi).